The following is a 367-amino-acid chain: Mannan endo-1,4-beta-mannosidase (367 aa).

The signal sequence occupies residues 1 to 17 (MLLTALAVLFASTGCQA). Residues tryptophan 79 and asparagine 176 each contribute to the substrate site. Glutamate 177 serves as the catalytic Proton donor. Cysteine 192 and cysteine 259 are disulfide-bonded. The substrate site is built by tryptophan 205, tryptophan 240, and tyrosine 279. The active-site Nucleophile is glutamate 308. Tryptophan 337 is a substrate binding site.

In terms of assembly, monomer. In terms of processing, the disulfide bond between Cys-192 and Cys-259 has not been observed in X-ray crystallography. This may be a consequence of the X-ray radiation.

The enzyme catalyses Random hydrolysis of (1-&gt;4)-beta-D-mannosidic linkages in mannans, galactomannans and glucomannans.. In terms of biological role, hydrolyzes 1,4-beta linked polysaccharide backbones of mannans. Hydrolyzes mannohexaose (M6) preferentially to mannotriose (M4) and less preferentially to mannotetraose (M3), mannopentaose (M5), and mannobiose (M2); hydrolyzes M5 preferentially to M2, and M3, and less preferentially to mannotetraose M4; hydrolyzes M4 preferentially to M3, and less preferentially to mannose (M1), plus very little M2. Does not hydrolyze mannobiose or mannotriose. Does not hydrolyze xlyan, starch, cellulose or galactose. This Mytilus edulis (Blue mussel) protein is Mannan endo-1,4-beta-mannosidase.